Reading from the N-terminus, the 105-residue chain is Large ribosomal subunit protein bL34m (105 aa).

A mitochondrion-targeting transit peptide spans 1-16 (MPLFARLCQPQSRRMF).

It belongs to the bacterial ribosomal protein bL34 family. In terms of assembly, component of the mitochondrial large ribosomal subunit (mt-LSU). Mature yeast 74S mitochondrial ribosomes consist of a small (37S) and a large (54S) subunit. The 37S small subunit contains a 15S ribosomal RNA (15S mt-rRNA) and 34 different proteins. The 54S large subunit contains a 21S rRNA (21S mt-rRNA) and 46 different proteins.

Its subcellular location is the mitochondrion. Its function is as follows. Component of the mitochondrial ribosome (mitoribosome), a dedicated translation machinery responsible for the synthesis of mitochondrial genome-encoded proteins, including at least some of the essential transmembrane subunits of the mitochondrial respiratory chain. The mitoribosomes are attached to the mitochondrial inner membrane and translation products are cotranslationally integrated into the membrane. This Saccharomyces cerevisiae (strain ATCC 204508 / S288c) (Baker's yeast) protein is Large ribosomal subunit protein bL34m.